A 137-amino-acid polypeptide reads, in one-letter code: Small ribosomal subunit protein uS9 (137 aa).

The disordered stretch occupies residues 103-137; the sequence is PPLKAEGYLTRDPRAKERKKYGLHKARKAPQYSKR. A compositionally biased stretch (basic residues) spans 118-137; that stretch reads KERKKYGLHKARKAPQYSKR.

This sequence belongs to the universal ribosomal protein uS9 family.

The polypeptide is Small ribosomal subunit protein uS9 (Crocosphaera subtropica (strain ATCC 51142 / BH68) (Cyanothece sp. (strain ATCC 51142))).